We begin with the raw amino-acid sequence, 80 residues long: MDTKTLIDKYNIENFTNYINFIIRNHQAGKGNLRFLVNLLKTTGGSNLKELDINPVEIENFNIDIYLDFLEFCLDSKFIF.

As to quaternary structure, self-associates.

In Beta vulgaris (Sugar beet), this protein is Protein P9.